We begin with the raw amino-acid sequence, 161 residues long: Cyclic pyranopterin monophosphate synthase (161 aa).

Substrate-binding positions include 76-78 (MCH) and 114-115 (ME). Aspartate 129 is a catalytic residue.

It belongs to the MoaC family. As to quaternary structure, homohexamer; trimer of dimers.

The enzyme catalyses (8S)-3',8-cyclo-7,8-dihydroguanosine 5'-triphosphate = cyclic pyranopterin phosphate + diphosphate. It participates in cofactor biosynthesis; molybdopterin biosynthesis. In terms of biological role, catalyzes the conversion of (8S)-3',8-cyclo-7,8-dihydroguanosine 5'-triphosphate to cyclic pyranopterin monophosphate (cPMP). This chain is Cyclic pyranopterin monophosphate synthase, found in Clostridium acetobutylicum (strain ATCC 824 / DSM 792 / JCM 1419 / IAM 19013 / LMG 5710 / NBRC 13948 / NRRL B-527 / VKM B-1787 / 2291 / W).